The primary structure comprises 405 residues: Tryptophan synthase beta chain (405 aa).

At lysine 98 the chain carries N6-(pyridoxal phosphate)lysine.

Belongs to the TrpB family. Tetramer of two alpha and two beta chains. It depends on pyridoxal 5'-phosphate as a cofactor.

The enzyme catalyses (1S,2R)-1-C-(indol-3-yl)glycerol 3-phosphate + L-serine = D-glyceraldehyde 3-phosphate + L-tryptophan + H2O. Its pathway is amino-acid biosynthesis; L-tryptophan biosynthesis; L-tryptophan from chorismate: step 5/5. In terms of biological role, the beta subunit is responsible for the synthesis of L-tryptophan from indole and L-serine. This Xylella fastidiosa (strain M12) protein is Tryptophan synthase beta chain.